Consider the following 439-residue polypeptide: Serine/threonine-protein kinase 2 (439 aa).

Residues 87-439 enclose the Protein kinase domain; the sequence is NDDFYHISTG…IFSDWINGGN (353 aa). ATP-binding positions include 93–101 and lysine 117; that span reads ISTGGYGIV. Aspartate 307 (proton acceptor) is an active-site residue.

It belongs to the protein kinase superfamily. Ser/Thr protein kinase family. Post-translationally, phosphorylated in vivo. Autophosphorylated in vitro.

The protein localises to the host endoplasmic reticulum. It is found in the host endoplasmic reticulum-Golgi intermediate compartment. The enzyme catalyses L-seryl-[protein] + ATP = O-phospho-L-seryl-[protein] + ADP + H(+). It catalyses the reaction L-threonyl-[protein] + ATP = O-phospho-L-threonyl-[protein] + ADP + H(+). In terms of biological role, essential serine-protein kinase involved in the early stage of virion morphogenesis. The chain is Serine/threonine-protein kinase 2 (OPG054) from Vaccinia virus (strain Tian Tan) (VACV).